A 1067-amino-acid polypeptide reads, in one-letter code: TBC1 domain family member 31 (1067 aa).

WD repeat units follow at residues 36–75 (GKVV…FRLV), 76–119 (LKTG…SWMR), 120–161 (GHEG…KLNI), 162–201 (RQSV…CKYQ), 202–249 (LPLP…RVIQ), and 250–288 (MPSQ…RFIN). Positions 419–594 (EYPAKYRMFV…RLFDNIFSNH (176 aa)) constitute a Rab-GAP TBC domain. Positions 724–773 (QQELLQKAEEQRKHVLEQEEEKLTQQRAKLAAMKRELKVKELQLLDATRR) form a coiled coil. 2 stretches are compositionally biased toward basic and acidic residues: residues 896 to 912 (KADA…EELQ) and 926 to 937 (MREEAHRKKDEA). Disordered regions lie at residues 896 to 955 (KADA…HSDG) and 1045 to 1067 (AARA…PVSP). 2 stretches are compositionally biased toward polar residues: residues 941–953 (IQES…STHS) and 1052–1067 (SSAS…PVSP).

Its subcellular location is the cytoplasm. It localises to the cytoskeleton. It is found in the microtubule organizing center. The protein localises to the centrosome. The protein resides in the centriolar satellite. Its subcellular location is the cilium basal body. In terms of biological role, molecular adapter which is involved in cilium biogenesis. Part of a functional complex including OFD1 a centriolar protein involved in cilium assembly. Could regulate the cAMP-dependent phosphorylation of OFD1, and its subsequent ubiquitination by PJA2 which ultimately leads to its proteasomal degradation. This Oryzias latipes (Japanese rice fish) protein is TBC1 domain family member 31.